Here is a 242-residue protein sequence, read N- to C-terminus: ATP synthase subunit a (242 aa).

The next 5 membrane-spanning stretches (helical) occupy residues 28–48 (LHGQ…LLVV), 89–109 (LPFV…GALI), 128–148 (INTT…AGLS), 193–213 (LVVA…AMFL), and 214–234 (GLFT…NYIG).

This sequence belongs to the ATPase A chain family. F-type ATPases have 2 components, CF(1) - the catalytic core - and CF(0) - the membrane proton channel. CF(1) has five subunits: alpha(3), beta(3), gamma(1), delta(1), epsilon(1). CF(0) has four main subunits: a, b, b' and c.

The protein resides in the cellular thylakoid membrane. Key component of the proton channel; it plays a direct role in the translocation of protons across the membrane. The chain is ATP synthase subunit a from Synechococcus sp. (strain WH7803).